Here is a 107-residue protein sequence, read N- to C-terminus: U1-lycotoxin-Ls1k (107 aa).

A signal peptide spans 1 to 20; sequence MMKVLVVVALLVTLISYSSS. A propeptide spanning residues 21 to 41 is cleaved from the precursor; it reads EGIDDLEADELLSLMANEQTR. 4 cysteine pairs are disulfide-bonded: Cys-44/Cys-59, Cys-51/Cys-68, Cys-58/Cys-86, and Cys-70/Cys-84.

The protein belongs to the neurotoxin 19 (CSTX) family. 04 (U1-Lctx) subfamily. In terms of tissue distribution, expressed by the venom gland.

It is found in the secreted. This Lycosa singoriensis (Wolf spider) protein is U1-lycotoxin-Ls1k.